A 340-amino-acid chain; its full sequence is E3 ubiquitin ligase BIG BROTHER-related (340 aa).

2 disordered regions span residues 1–56 (MPME…GVGE) and 133–182 (YDED…GNSD). Residues 34-46 (NRQTGVVSDTGSG) are compositionally biased toward polar residues. 2 stretches are compositionally biased toward acidic residues: residues 133–164 (YDEDEFDDPENEDEDDDEDEYETDDDPQEDGL) and 173–182 (DDQEDDGNSD). Residues 288 to 329 (CVICRLDYEDDEDLILLPCKHSYHSECINNWLKINKVCPVCS) form an RING-type; atypical zinc finger.

Auto-ubiquitinated.

The enzyme catalyses S-ubiquitinyl-[E2 ubiquitin-conjugating enzyme]-L-cysteine + [acceptor protein]-L-lysine = [E2 ubiquitin-conjugating enzyme]-L-cysteine + N(6)-ubiquitinyl-[acceptor protein]-L-lysine.. It functions in the pathway protein modification; protein ubiquitination. Functionally, E3 ubiquitin-ligase probably involved in organ size regulation. This is E3 ubiquitin ligase BIG BROTHER-related (BBR) from Arabidopsis thaliana (Mouse-ear cress).